The sequence spans 525 residues: Peptide chain release factor 3 (525 aa).

The region spanning 9 to 276 is the tr-type G domain; that stretch reads AKRRTFAIIS…GFTRYAPAPQ (268 aa). Residues 18-25, 86-90, and 140-143 each bind GTP; these read SHPDAGKT, DTPGH, and NKFD.

The protein belongs to the TRAFAC class translation factor GTPase superfamily. Classic translation factor GTPase family. PrfC subfamily.

It localises to the cytoplasm. Its function is as follows. Increases the formation of ribosomal termination complexes and stimulates activities of RF-1 and RF-2. It binds guanine nucleotides and has strong preference for UGA stop codons. It may interact directly with the ribosome. The stimulation of RF-1 and RF-2 is significantly reduced by GTP and GDP, but not by GMP. This chain is Peptide chain release factor 3, found in Francisella tularensis subsp. holarctica (strain FTNF002-00 / FTA).